Consider the following 170-residue polypeptide: Copper transporter 1 (170 aa).

Residues 1–29 (MDHDHMHGMPRPSSSSSSSPSSMMNNGSM) form a disordered region. Over residues 9–29 (MPRPSSSSSSSPSSMMNNGSM) the composition is skewed to low complexity. The next 2 helical transmembrane spans lie at 65-85 (GMYALCLIFVFFLAVLTEWLA) and 114-134 (IGLAYLVMLAVMSFNAGVFLV).

It belongs to the copper transporter (Ctr) (TC 1.A.56) family. SLC31A subfamily. As to expression, expressed in the root apex, lateral root primordia, embryo, trichomes, guard cells and pollen grains.

It is found in the membrane. Functionally, copper transporter involved in copper acquisition and transport in leaves. Required for copper homeostasis and normal plant growth and development. The polypeptide is Copper transporter 1 (COPT1) (Arabidopsis thaliana (Mouse-ear cress)).